Consider the following 196-residue polypeptide: Acyl-homoserine-lactone synthase (196 aa).

Belongs to the autoinducer synthase family.

It catalyses the reaction a fatty acyl-[ACP] + S-adenosyl-L-methionine = an N-acyl-L-homoserine lactone + S-methyl-5'-thioadenosine + holo-[ACP] + H(+). In terms of biological role, required for the synthesis of a yet unknown N-aceyl-homoserine lactone (N-aceyl-HSL), an autoinducer molecule which binds to PhzR and thus regulates phenazine production. The sequence is that of Acyl-homoserine-lactone synthase (phzI) from Pseudomonas chlororaphis (Pseudomonas aureofaciens).